A 277-amino-acid polypeptide reads, in one-letter code: MALKQFNPTTPGQRQLVIVDRSCLYKGKSVKTLTEGLSSKGGRNNRGRVTARFQGGGHKRSYRFVDFKRFKRDVPAKVERLEYDPNRTAFIALIRYEDGQLSYILAPQRLDVGDSVIAGSNVDIKPGNAMPLGNMPVGTIIHNVEMKPGKGGQIARSAGAYAQLVGRDQGMAILRLNSGEQRLVSSGCFATVGAVSNPDHANINDGKAGRSRWRGRRPHVRGVAMNPVDHPHGGGEGRTSGGRHPVSPWGKPTKGKRTRSNKATDKFIMRTRHQRKK.

The segment at 222–277 is disordered; sequence GVAMNPVDHPHGGGEGRTSGGRHPVSPWGKPTKGKRTRSNKATDKFIMRTRHQRKK.

The protein belongs to the universal ribosomal protein uL2 family. As to quaternary structure, part of the 50S ribosomal subunit. Forms a bridge to the 30S subunit in the 70S ribosome.

Its function is as follows. One of the primary rRNA binding proteins. Required for association of the 30S and 50S subunits to form the 70S ribosome, for tRNA binding and peptide bond formation. It has been suggested to have peptidyltransferase activity; this is somewhat controversial. Makes several contacts with the 16S rRNA in the 70S ribosome. The protein is Large ribosomal subunit protein uL2 of Bartonella henselae (strain ATCC 49882 / DSM 28221 / CCUG 30454 / Houston 1) (Rochalimaea henselae).